Consider the following 284-residue polypeptide: uncharacterized protein (284 aa).

3 helical membrane-spanning segments follow: residues 174–194 (LFVL…YISI), 217–237 (MLIP…PGTA), and 241–261 (LIVL…SGSC).

Its subcellular location is the membrane. This is an uncharacterized protein from Saccharomyces cerevisiae (strain ATCC 204508 / S288c) (Baker's yeast).